The following is a 104-amino-acid chain: Small ribosomal subunit protein uS10 (104 aa).

The protein belongs to the universal ribosomal protein uS10 family. As to quaternary structure, part of the 30S ribosomal subunit.

In terms of biological role, involved in the binding of tRNA to the ribosomes. The polypeptide is Small ribosomal subunit protein uS10 (Helicobacter pylori (strain P12)).